The chain runs to 522 residues: Sorting nexin-1 (522 aa).

Residues 1-144 (MASGGGGCSA…EEEEQEDQFD (144 aa)) are disordered. A phosphoserine mark is found at serine 32 and serine 39. Acidic residues predominate over residues 35–45 (EAGDSDTEGED). Phosphothreonine is present on residues threonine 41 and threonine 48. The span at 55–65 (KPQSPKKTTSL) shows a compositional bias: polar residues. A phosphoserine mark is found at serine 58 and serine 72. Residues 71–80 (GSKENGIHED) show a composition bias toward basic and acidic residues. Polar residues predominate over residues 98-125 (LDSTQNNQKTMPGKTLTSHSPQEATNSP). A compositionally biased stretch (acidic residues) spans 132-143 (EELEEEEQEDQF). Positions 143-272 (FDLTVGITDP…EFLEKEELPR (130 aa)) constitute a PX domain. A 1,2-diacyl-sn-glycero-3-phospho-(1D-myo-inositol-3-phosphate)-binding residues include arginine 186, serine 188, and lysine 214. Phosphoserine is present on serine 188. Lysine 237 is modified (N6-acetyllysine). Arginine 238 contacts a 1,2-diacyl-sn-glycero-3-phospho-(1D-myo-inositol-3-phosphate). Phosphoserine is present on serine 280. The segment at 281–298 (GAGLLKMFNKATDAVSKM) is membrane-binding amphipathic helix. A BAR domain is found at 302–522 (MNESDIWFEE…AFLPEAKAIS (221 aa)).

This sequence belongs to the sorting nexin family. Predominantly forms heterodimers with BAR domain-containing sorting nexins SNX5, SNX6 and SNX32. Can self-associate to form homodimers. The heterodimers are proposed to self-assemble into helical arrays on the membrane to stabilize and expand local membrane curvature underlying endosomal tubule formation. Thought to be a component of the originally described retromer complex (also called SNX-BAR retromer) which is a pentamer containing the heterotrimeric retromer cargo-selective complex (CSC), also described as vacuolar protein sorting subcomplex (VPS) and a heterodimeric membrane-deforming subcomplex formed between SNX1 or SNX2 and SNX5 or SNX6 (also called SNX-BAR subcomplex); the respective CSC and SNX-BAR subcomplexes associate with low affinity. Interacts with SNX5, SNX6, SNX32, VPS26A, VPS29, VPS35, DRD5, DENND5A, KALRN, RHOG (GDP-bound form). The interaction with SNX2 is reported controversially. Interacts with DNAJC13; prevented by presence of HGS. Interacts with HGS.

It localises to the endosome membrane. The protein localises to the golgi apparatus. The protein resides in the trans-Golgi network membrane. Its subcellular location is the early endosome membrane. It is found in the cell projection. It localises to the lamellipodium. Its function is as follows. Involved in several stages of intracellular trafficking. Interacts with membranes containing phosphatidylinositol 3-phosphate (PtdIns(3P)) or phosphatidylinositol 3,5-bisphosphate (PtdIns(3,5)P2). Acts in part as component of the retromer membrane-deforming SNX-BAR subcomplex. The SNX-BAR retromer mediates retrograde transport of cargo proteins from endosomes to the trans-Golgi network (TGN) and is involved in endosome-to-plasma membrane transport for cargo protein recycling. The SNX-BAR subcomplex functions to deform the donor membrane into a tubular profile called endosome-to-TGN transport carrier (ETC). Can sense membrane curvature and has in vitro vesicle-to-membrane remodeling activity. Involved in retrograde endosome-to-TGN transport of lysosomal enzyme receptors (IGF2R, M6PR and SORT1). Plays a role in targeting ligand-activated EGFR to the lysosomes for degradation after endocytosis from the cell surface and release from the Golgi. Involvement in retromer-independent endocytic trafficking of P2RY1 and lysosomal degradation of protease-activated receptor-1/F2R. Promotes KALRN- and RHOG-dependent but retromer-independent membrane remodeling such as lamellipodium formation; the function is dependent on GEF activity of KALRN. Required for endocytosis of DRD5 upon agonist stimulation but not for basal receptor trafficking. The sequence is that of Sorting nexin-1 (Snx1) from Mus musculus (Mouse).